The following is a 380-amino-acid chain: MRCLGLMSGTSADGVDAVLADFRGSPNHPQWDLIRHVHHPYPEALRHRVVSAGQGEPSRADQWLDLAEAITEAQAMAARSCDPHAEAVLVGCHGQTIWHRPPTSQQRGASWQLLQAPLLAQLLERPVVHDFRAADLALGGQGAPLVPKADAALLGGTKGWRALLNLGGIANLTLIPPCCGPDRDASVQGWDCGPANSLIDLAVQQFSNGTLLFDRGGAMAKAGHSDETSIRRWLQEPYFQSPPPKSTGRELFGRANLQQRLNDLGRDCSSQDAVATLTSFSAAVVAQDLEQLMQRDRIRPLELIVAGGGRHNPVLMDQLQQRCRGLQLSSSQEMGLPVEAREALVFALLAWWHQRKHPGNSPSITGATRESVLGVLVHPG.

ATP is bound at residue 9–16 (GTSADGVD).

It belongs to the anhydro-N-acetylmuramic acid kinase family.

The enzyme catalyses 1,6-anhydro-N-acetyl-beta-muramate + ATP + H2O = N-acetyl-D-muramate 6-phosphate + ADP + H(+). Its pathway is amino-sugar metabolism; 1,6-anhydro-N-acetylmuramate degradation. It functions in the pathway cell wall biogenesis; peptidoglycan recycling. In terms of biological role, catalyzes the specific phosphorylation of 1,6-anhydro-N-acetylmuramic acid (anhMurNAc) with the simultaneous cleavage of the 1,6-anhydro ring, generating MurNAc-6-P. Is required for the utilization of anhMurNAc either imported from the medium or derived from its own cell wall murein, and thus plays a role in cell wall recycling. The polypeptide is Anhydro-N-acetylmuramic acid kinase (Synechococcus sp. (strain CC9902)).